We begin with the raw amino-acid sequence, 427 residues long: Gamma-glutamyl phosphate reductase (427 aa).

The protein belongs to the gamma-glutamyl phosphate reductase family.

It localises to the cytoplasm. The enzyme catalyses L-glutamate 5-semialdehyde + phosphate + NADP(+) = L-glutamyl 5-phosphate + NADPH + H(+). Its pathway is amino-acid biosynthesis; L-proline biosynthesis; L-glutamate 5-semialdehyde from L-glutamate: step 2/2. Its function is as follows. Catalyzes the NADPH-dependent reduction of L-glutamate 5-phosphate into L-glutamate 5-semialdehyde and phosphate. The product spontaneously undergoes cyclization to form 1-pyrroline-5-carboxylate. The protein is Gamma-glutamyl phosphate reductase of Rhizobium etli (strain ATCC 51251 / DSM 11541 / JCM 21823 / NBRC 15573 / CFN 42).